Reading from the N-terminus, the 184-residue chain is ADP-ribosylation factor-like protein 2 (184 aa).

Gly2 is lipidated: N-myristoyl glycine. 23–30 provides a ligand contact to GTP; it reads GLDNAGKT. Phosphoserine is present on Ser45. GTP-binding positions include 66–70 and Gly68; that span reads DVGGQ. Lys71 is covalently cross-linked (Glycyl lysine isopeptide (Lys-Gly) (interchain with G-Cter in ubiquitin)). 125-128 provides a ligand contact to GTP; that stretch reads NKQD.

The protein belongs to the small GTPase superfamily. Arf family. In terms of assembly, interacts with ELMOD2. Interacts with ARL2BP; the GTP-bound form interacts with ARL2BP. The GDP-bound form interacts preferentially with TBCD. Interacts with UNC119. Found in a complex with ARL2, ARL2BP and SLC25A4. The GTP-bound form interacts with PDE6D. Found in a complex with ARL2, ARL2BP and SLC25A6. Found in a complex with at least ARL2, PPP2CB, PPP2R1A, PPP2R2A, PPP2R5E and TBCD. In terms of processing, not N-myristoylated. In terms of tissue distribution, expressed in liver and retina (at protein level).

It is found in the nucleus. Its subcellular location is the mitochondrion intermembrane space. The protein localises to the cytoplasm. It localises to the cytoskeleton. The protein resides in the microtubule organizing center. It is found in the centrosome. Its subcellular location is the mitochondrion. Small GTP-binding protein which cycles between an inactive GDP-bound and an active GTP-bound form, and the rate of cycling is regulated by guanine nucleotide exchange factors (GEF) and GTPase-activating proteins (GAP). GTP-binding protein that does not act as an allosteric activator of the cholera toxin catalytic subunit. Regulates formation of new microtubules and centrosome integrity. Prevents the TBCD-induced microtubule destruction. Participates in association with TBCD, in the disassembly of the apical junction complexes. Antagonizes the effect of TBCD on epithelial cell detachment and tight and adherens junctions disassembly. Together with ARL2, plays a role in the nuclear translocation, retention and transcriptional activity of STAT3. Component of a regulated secretory pathway involved in Ca(2+)-dependent release of acetylcholine. Required for normal progress through the cell cycle. This is ADP-ribosylation factor-like protein 2 (ARL2) from Bos taurus (Bovine).